The primary structure comprises 130 residues: Small ribosomal subunit protein uS9 (130 aa).

The tract at residues 105–130 (TRDSRMKERKKPGLRGARRAPQFSKR) is disordered. Residues 111 to 130 (KERKKPGLRGARRAPQFSKR) are compositionally biased toward basic residues.

It belongs to the universal ribosomal protein uS9 family.

In Lysinibacillus sphaericus (strain C3-41), this protein is Small ribosomal subunit protein uS9.